The sequence spans 474 residues: Aspartyl/glutamyl-tRNA(Asn/Gln) amidotransferase subunit B (474 aa).

This sequence belongs to the GatB/GatE family. GatB subfamily. Heterotrimer of A, B and C subunits.

The enzyme catalyses L-glutamyl-tRNA(Gln) + L-glutamine + ATP + H2O = L-glutaminyl-tRNA(Gln) + L-glutamate + ADP + phosphate + H(+). It carries out the reaction L-aspartyl-tRNA(Asn) + L-glutamine + ATP + H2O = L-asparaginyl-tRNA(Asn) + L-glutamate + ADP + phosphate + 2 H(+). Functionally, allows the formation of correctly charged Asn-tRNA(Asn) or Gln-tRNA(Gln) through the transamidation of misacylated Asp-tRNA(Asn) or Glu-tRNA(Gln) in organisms which lack either or both of asparaginyl-tRNA or glutaminyl-tRNA synthetases. The reaction takes place in the presence of glutamine and ATP through an activated phospho-Asp-tRNA(Asn) or phospho-Glu-tRNA(Gln). The chain is Aspartyl/glutamyl-tRNA(Asn/Gln) amidotransferase subunit B from Desulfotalea psychrophila (strain LSv54 / DSM 12343).